The following is a 355-amino-acid chain: UDP-N-acetylglucosamine--N-acetylmuramyl-(pentapeptide) pyrophosphoryl-undecaprenol N-acetylglucosamine transferase (355 aa).

Residues 14–16 (TGG), asparagine 126, arginine 162, serine 190, isoleucine 243, 262–267 (ALTVSE), and glutamine 287 contribute to the UDP-N-acetyl-alpha-D-glucosamine site.

The protein belongs to the glycosyltransferase 28 family. MurG subfamily.

It localises to the cell inner membrane. The catalysed reaction is di-trans,octa-cis-undecaprenyl diphospho-N-acetyl-alpha-D-muramoyl-L-alanyl-D-glutamyl-meso-2,6-diaminopimeloyl-D-alanyl-D-alanine + UDP-N-acetyl-alpha-D-glucosamine = di-trans,octa-cis-undecaprenyl diphospho-[N-acetyl-alpha-D-glucosaminyl-(1-&gt;4)]-N-acetyl-alpha-D-muramoyl-L-alanyl-D-glutamyl-meso-2,6-diaminopimeloyl-D-alanyl-D-alanine + UDP + H(+). It functions in the pathway cell wall biogenesis; peptidoglycan biosynthesis. Cell wall formation. Catalyzes the transfer of a GlcNAc subunit on undecaprenyl-pyrophosphoryl-MurNAc-pentapeptide (lipid intermediate I) to form undecaprenyl-pyrophosphoryl-MurNAc-(pentapeptide)GlcNAc (lipid intermediate II). This Vibrio vulnificus (strain CMCP6) protein is UDP-N-acetylglucosamine--N-acetylmuramyl-(pentapeptide) pyrophosphoryl-undecaprenol N-acetylglucosamine transferase.